A 155-amino-acid chain; its full sequence is Small ribosomal subunit protein uS7c (155 aa).

The protein belongs to the universal ribosomal protein uS7 family. In terms of assembly, part of the 30S ribosomal subunit.

The protein resides in the plastid. The protein localises to the chloroplast. Its function is as follows. One of the primary rRNA binding proteins, it binds directly to 16S rRNA where it nucleates assembly of the head domain of the 30S subunit. This chain is Small ribosomal subunit protein uS7c (rps7), found in Allium textile (Textile onion).